The chain runs to 235 residues: DUP240 protein DFP4 (235 aa).

Residues 1 to 44 (MSSELLISNSKPRPEGLRKLCEGETVILPRDITPSKCAYFLKQN) are Cytoplasmic-facing. The chain crosses the membrane as a helical span at residues 45–65 (IVFISYIFIHIIITIILNRLA). Over 66-72 (LSAHGNT) the chain is Extracellular. Residues 73–93 (LIIILAALLITISLFLLLLLP) traverse the membrane as a helical segment. At 94–235 (YLSCSRYKLR…DKYPEMGVTV (142 aa)) the chain is on the cytoplasmic side.

This sequence belongs to the DUP/COS family. As to quaternary structure, interacts according to large scale protein interaction studies with BZZ1, SRB4 and SUA7.

Its subcellular location is the cell membrane. The sequence is that of DUP240 protein DFP4 from Saccharomyces cerevisiae (strain ATCC 204508 / S288c) (Baker's yeast).